Consider the following 379-residue polypeptide: Stimulator of interferon genes protein (379 aa).

The Cytoplasmic segment spans residues 1–17 (MPHSSLHPSIPCPRGHG). The mediates interaction with ZDHHC1 and ZDHHC11 stretch occupies residues 1–190 (MPHSSLHPSI…TYNQHYNNLL (190 aa)). A helical membrane pass occupies residues 18–34 (AQKAALVLLSACLVTLW). Lysine 20 participates in a covalent cross-link: Glycyl lysine isopeptide (Lys-Gly) (interchain with G-Cter in ubiquitin). The Lumenal segment spans residues 35 to 44 (GLGEPPEHTL). Residues 45-69 (RYLVLHLASLQLGLLLNGVCSLAEE) traverse the membrane as a helical segment. Residues 70–91 (LRHIHSRYRGSYWRTVRACLGC) are Cytoplasmic-facing. S-palmitoyl cysteine attachment occurs at residues cysteine 88 and cysteine 91. Residues 92 to 106 (PLRRGALLLLSIYFY) traverse the membrane as a helical segment. Topologically, residues 107-116 (YSLPNAVGPP) are lumenal. The helical transmembrane segment at 117–134 (FTWMLALLGLSQALNILL) threads the bilayer. Residues 135–379 (GLKGLAPAEI…KPLPLRTDFS (245 aa)) lie on the Cytoplasmic side of the membrane. Residue lysine 150 forms a Glycyl lysine isopeptide (Lys-Gly) (interchain with G-Cter in ubiquitin) linkage. The tract at residues 153–340 (FNVAHGLAWS…RHLRQEEKEE (188 aa)) is cyclic dinucleotide-binding domain (CBD). Residues serine 162 and tyrosine 167 each contribute to the 2',3'-cGAMP site. The 3',3'-c-di-GMP site is built by serine 162 and tyrosine 167. Tyrosine 167 is a binding site for 2',3'-cUAMP. Phosphothreonine is present on threonine 229. Lysine 236 participates in a covalent cross-link: Glycyl lysine isopeptide (Lys-Gly) (interchain with G-Cter in ubiquitin). A 2',3'-cGAMP-binding site is contributed by arginine 238. Arginine 238 serves as a coordination point for 2',3'-cUAMP. 3',3'-c-di-GMP-binding positions include 238 to 241 (RVYS) and threonine 263. Residue serine 241 is modified to Phosphoserine. Threonine 263 provides a ligand contact to 2',3'-cGAMP. Threonine 263 provides a ligand contact to 2',3'-cUAMP. A Glycyl lysine isopeptide (Lys-Gly) (interchain with G-Cter in SUMO) cross-link involves residue lysine 338. A C-terminal tail (CTT) region spans residues 340-379 (EVTVGSLKTSAVPSTSTMSQEPELLISGMEKPLPLRTDFS). The segment at 341-370 (VTVGSLKTSAVPSTSTMSQEPELLISGMEK) is disordered. Positions 345-359 (SLKTSAVPSTSTMSQ) are enriched in polar residues. Threonine 354 is subject to Phosphothreonine. Serine 355 is modified (phosphoserine; by MAP3K7). Threonine 356 bears the Phosphothreonine mark. A phosphoserine; by TBK1 mark is found at serine 358 and serine 366. The pLxIS motif signature appears at 363–366 (LLIS).

The protein belongs to the STING family. In terms of assembly, homodimer; forms a homodimer in absence of cyclic nucleotide (c-di-GMP or cGAMP); 'Lys-63'-linked ubiquitination at Lys-150 is required for homodimerization. Homotetramer; in presence of cyclic nucleotide (c-di-GMP or cGAMP), forms tetramers and higher-order oligomers through side-by-side packing. Interacts (when phosphorylated) with IRF3; following activation and phosphorylation on the pLxIS motif by TBK1, recruits IRF3. Interacts with RIGI, MAVS and SSR2. Interacts with RNF5 and TRIM56. Interacts with TBK1; when homodimer, leading to subsequent production of IFN-beta. Interacts with IFIT1 and IFIT2. Interacts with TRIM29; this interaction induces STING1 ubiquitination and subsequent degradation. Associates with the MHC-II complex. Interacts with STEEP1; interaction takes place upon cGAMP-activation and STING1 phosphorylation by MAP3K7/TAK1 and promotes STING1 translocation to COPII vesicles. Interacts with SEC24A, SEC24B, and SEC24C; promoting translocation to COPII vesicles. Interacts (when ubiquitinated) with SQSTM1; leading to relocalization to autophagosomes. Interacts with SURF4. Interacts with HNRNPA2B1. Interacts with ZDHHC1; ZDHHC1 constitutively interacts with STING1 and in presence of DNA viruses activates it by promoting its cGAMP-induced oligomerization and the recruitment of downstream signaling components. Interacts with ZDHHC11; in presence of DNA viruses promotes the recruitment of IRF3 to STING1. Interacts with TOMM70. Interacts with isoform IFI16-beta of IFI16. Interacts with TAB1; promoting recruitment of TAB1 to the endoplasmic reticulum membrane and subsequent activation of MAP3K7/TAK1. Interacts (via transmembrane domain) with TMEM203. Interacts with DDX41. Interacts with TMEM120A (via C-terminal domain); regulates the trafficking of STING1 from the ER to the ER-Golgi intermediate compartment to elicit antiviral effects. As to quaternary structure, (Microbial infection) Interacts with human papillomavirus (HPV) protein E7. (Microbial infection) Interacts with adenovirus early E1A protein. In terms of assembly, (Microbial infection) Interacts with herpes simplex virus 1 protein ICP34.5; this interaction inhibits the intracellular DNA sensing pathway. As to quaternary structure, (Microbial infection) Interacts with Chikungunya virus non-structural protein 1; this interaction results in inhibition of cGAS-STING signaling and increased levels of palmitoylated nsP1 and protein stabilization. (Microbial infection) Interacts with human cytomegalovirus proteins UL94, UL42 and UL138; these interactions result in the inhibition of cGAS-STING signaling. In terms of assembly, (Microbial infection) Interacts with varivella virus protein 39; this interaction results in the inhibition of cGAS-STING signaling. Phosphorylation by TBK1 leads to activation and production of IFN-beta. Following cyclic nucleotide (c-di-GMP or cGAMP)-binding, activation and translocation from the endoplasmic reticulum, STING1 is phosphorylated by TBK1 at Ser-366 in the pLxIS motif. The phosphorylated pLxIS motif constitutes an IRF3-binding motif, leading to recruitment of the transcription factor IRF3 to induce type-I interferons and other cytokines. The phosphorylated pLxIS motif facilitates SENP2 recruitment during late phase of viral infection. Phosphorylated on tyrosine residues upon MHC-II aggregation. Dephosphorylation by PPP6C leads to inactivation and decreased production of IFN-beta. Phosphorylation at Ser-358 is also required to activate IRF3. Phosphorylation at Ser-355 by MAP3K7/TAK1 facilitates its interaction with STEEP1, promoting STING1 translocation to COPII vesicles. In terms of processing, ubiquitinated. Ubiquitinated via 'Lys-63'-linked ubiquitin chains in response to double-stranded DNA treatment, leading to relocalization to autophagosomes and subsequent degradation; this process is dependent on SQSTM1. 'Lys-63'-linked ubiquitination mediated by TRIM56 at Lys-150 promotes homodimerization and recruitment of the antiviral kinase TBK1 and subsequent production of IFN-beta. 'Lys-48'-linked polyubiquitination at Lys-150 occurring after viral infection is mediated by RNF5 and leads to proteasomal degradation. 'Lys-11'-linked polyubiquitination at Lys-150 by RNF26 leads to stabilize STING1: it protects STING1 from RNF5-mediated 'Lys-48'-linked polyubiquitination. 'Lys-33'-linked and 'Lys-48'-linked deubiquitinated by USP20; leading to its stabilization and promotion of innate antiviral response. 'Lys-48'-linked deubiquitinated by USP44; leading to its stabilization and promotion of innate antiviral response. Deubiquitinated by USP13; leading to inhibition of innate antiviral response. 'Lys-63'-linked deubiquitinated by USP49; leading to inhibition of the subsequent recruitment of TBK1 to the signaling complex. 'Lys-63'-linked ubiquitination mediated by RNF39 promotes the activation of the cGAS-STING pathway. MARCHF5-mediated ubiquitination prevents the oxidation-induced polymer formation. Post-translationally, (Microbial infection) Deubiquitinated by Epstein-Barr virus BPLF1 on both 'Lys-48' and 'Lys-63'-linked ubiquitin chains; leading to inhibition of cGAS-STING signaling. Sumoylated at Lys-338 by TRIM38 during the early phase of viral infection, promoting its stability by preventing its relocalization to autophagosomes and subsequent degradation. Desumoylated by SENP2 during the late phase of viral infection. In terms of processing, palmitoylation takes place in the Golgi apparatus and creates a platform for the recruitment of TBK1. As to expression, ubiquitously expressed. Expressed in skin endothelial cells, alveolar type 2 pneumocytes, bronchial epithelium and alveolar macrophages.

It localises to the endoplasmic reticulum membrane. The protein localises to the cytoplasm. It is found in the perinuclear region. The protein resides in the endoplasmic reticulum-Golgi intermediate compartment membrane. Its subcellular location is the golgi apparatus membrane. It localises to the cytoplasmic vesicle. The protein localises to the autophagosome membrane. It is found in the mitochondrion outer membrane. The protein resides in the cell membrane. The enzyme catalyses H(+)(in) = H(+)(out). Activated upon binding to the hydrolysis-resistant 2'3'-cG(s)A(s)MP, an analog of cGAMP, in which phosphodiester linkages are replaced by phosphothioate linkages. Specifically inhibited by small-molecule H-151 (N-(4-ethylphenyl)-N'-1H-indol-3-yl-urea), which covalently binds Cys-91 and prevents palmitoylation and subsequent activation of STING1. In contrast to mouse protein, not activated by anticancer molecule 5,6-dimethylxanthenone 4-acetic acid (DMXAA). Inhibited by compound 18 ([(3S,4S)-2-(4-tert-butyl-3-chlorophenyl)-3-(2,3-dihydro-1,4-benzodioxin-6-yl)-7-fluoro-1-oxo-1,2,3,4-tetrahydroisoquinolin-4-yl]acetate), a competitive inhibitor with slow dissociation kinetics and good oral bioavailability. Homooligomerization and ability to promote the production of type I interferons is activated by C53, a small benzothiazinone-like compound that binds to the transmembrane regions. in the area of the putative pore. In contrast, compound C53, directly inhibits the proton channel activity and facilitate MAP1LC3B/LC3B lipidation and autophagosome formation. Its function is as follows. Facilitator of innate immune signaling that acts as a sensor of cytosolic DNA from bacteria and viruses and promotes the production of type I interferon (IFN-alpha and IFN-beta). Innate immune response is triggered in response to non-CpG double-stranded DNA from viruses and bacteria delivered to the cytoplasm. Acts by binding cyclic dinucleotides: recognizes and binds cyclic di-GMP (c-di-GMP), a second messenger produced by bacteria, cyclic UMP-AMP (2',3'-cUAMP), and cyclic GMP-AMP (cGAMP), a messenger produced by CGAS in response to DNA virus in the cytosol. Upon binding to c-di-GMP, cUAMP or cGAMP, STING1 oligomerizes, translocates from the endoplasmic reticulum and is phosphorylated by TBK1 on the pLxIS motif, leading to recruitment and subsequent activation of the transcription factor IRF3 to induce expression of type I interferon and exert a potent anti-viral state. Exhibits 2',3' phosphodiester linkage-specific ligand recognition: can bind both 2'-3' linked cGAMP (2'-3'-cGAMP) and 3'-3' linked cGAMP but is preferentially activated by 2'-3' linked cGAMP. The preference for 2'-3'-cGAMP, compared to other linkage isomers is probably due to the ligand itself, whichs adopts an organized free-ligand conformation that resembles the STING1-bound conformation and pays low energy costs in changing into the active conformation. In addition to promote the production of type I interferons, plays a direct role in autophagy. Following cGAMP-binding, STING1 buds from the endoplasmic reticulum into COPII vesicles, which then form the endoplasmic reticulum-Golgi intermediate compartment (ERGIC). The ERGIC serves as the membrane source for WIPI2 recruitment and LC3 lipidation, leading to formation of autophagosomes that target cytosolic DNA or DNA viruses for degradation by the lysosome. Promotes autophagy by acting as a proton channel that directs proton efflux from the Golgi to facilitate MAP1LC3B/LC3B lipidation. The autophagy- and interferon-inducing activities can be uncoupled and autophagy induction is independent of TBK1 phosphorylation. Autophagy is also triggered upon infection by bacteria: following c-di-GMP-binding, which is produced by live Gram-positive bacteria, promotes reticulophagy. May be involved in translocon function, the translocon possibly being able to influence the induction of type I interferons. May be involved in transduction of apoptotic signals via its association with the major histocompatibility complex class II (MHC-II). In terms of biological role, (Microbial infection) Antiviral activity is antagonized by oncoproteins, such as papillomavirus (HPV) protein E7 and adenovirus early E1A protein. Such oncoproteins prevent the ability to sense cytosolic DNA. The sequence is that of Stimulator of interferon genes protein from Homo sapiens (Human).